Reading from the N-terminus, the 85-residue chain is uncharacterized protein (85 aa).

The protein belongs to the ycf76 family.

It localises to the plastid. It is found in the chloroplast. This is an uncharacterized protein from Zea mays (Maize).